Consider the following 2116-residue polypeptide: Unconventional myosin-VIIb (2116 aa).

The region spanning 65–760 is the Myosin motor domain; sequence QGVDDMIRLG…QDTLLEVQRS (696 aa). 158–165 is a binding site for ATP; that stretch reads GESGAGKT. The tract at residues 637–659 is actin-binding; it reads LDQLMKILTNCQPYFIRCIKPNE. IQ domains lie at 745–765, 763–792, 786–815, 814–834, 832–861, and 855–884; these read IFLRDHQDTLLEVQRSQVLDR, LDRAALSIQKVLRGYRYRKEFLRQRRAAVT, QRRAAVTLQAWWRGYCNRRNFKLILVGFER, ERLQAIARSQPLARQYQAMRQ, MRQRTVQLQALCRGYLVRQQVQAKRRAVVV, and KRRAVVVIQAHARGMAARRNFQQRKANAPL. Phosphoserine is present on serine 904. A mediates interaction with ANKS4B region spans residues 916-1542; the sequence is EKVFGFLPAM…KKQGLLASEN (627 aa). The MyTH4 1 domain occupies 989 to 1192; sequence HIRRPLRYPL…PTWLELQAVK (204 aa). The FERM 1 domain occupies 1197-1506; the sequence is IPIQVILATG…EGLKERSIFA (310 aa). Serine 1371 is modified (phosphoserine). The region spanning 1501–1567 is the SH3 domain; the sequence is ERSIFAMALQ…PMACLYTIPT (67 aa). A mediates interaction with CDHR2, CDHR5 and USH1C region spans residues 1501–2116; that stretch reads ERSIFAMALQ…GSKAPALAST (616 aa). MyTH4 domains follow at residues 1644 to 1793 and 1790 to 1896; these read YSCE…EAAE and EAAE…KLWL. At serine 1645 the chain carries Phosphoserine. The region spanning 1799–2102 is the FERM 2 domain; that stretch reads ICHKIYFPND…SYVQQLLSAM (304 aa).

The protein belongs to the TRAFAC class myosin-kinesin ATPase superfamily. Myosin family. As to quaternary structure, part of the IMAC/intermicrovillar adhesion complex/intermicrovillar tip-link complex composed of ANKS4B, MYO7B, USH1C, CDHR2 and CDHR5. Interacts with CDHR2. Interacts with CDHR5. Interacts with USH1C. Interacts with ANKS4B; requires initial interaction with USH1C. Interacts with CALML4; the interaction mediates the association of CALML4 with the IMAC/intermicrovillar adhesion complex.

The protein localises to the cytoplasm. Its subcellular location is the cytoskeleton. It localises to the cell projection. The protein resides in the microvillus. Its function is as follows. Myosins are actin-based motor molecules with ATPase activity. Their highly divergent tails are presumed to bind to membranous compartments, which would be moved relative to actin filaments. As part of the intermicrovillar adhesion complex/IMAC plays a role in epithelial brush border differentiation, controlling microvilli organization and length. May link the complex to the actin core bundle of microvilli. The protein is Unconventional myosin-VIIb of Homo sapiens (Human).